The primary structure comprises 572 residues: Proline--tRNA ligase (572 aa).

Belongs to the class-II aminoacyl-tRNA synthetase family. ProS type 1 subfamily. Homodimer.

It localises to the cytoplasm. It catalyses the reaction tRNA(Pro) + L-proline + ATP = L-prolyl-tRNA(Pro) + AMP + diphosphate. Functionally, catalyzes the attachment of proline to tRNA(Pro) in a two-step reaction: proline is first activated by ATP to form Pro-AMP and then transferred to the acceptor end of tRNA(Pro). As ProRS can inadvertently accommodate and process non-cognate amino acids such as alanine and cysteine, to avoid such errors it has two additional distinct editing activities against alanine. One activity is designated as 'pretransfer' editing and involves the tRNA(Pro)-independent hydrolysis of activated Ala-AMP. The other activity is designated 'posttransfer' editing and involves deacylation of mischarged Ala-tRNA(Pro). The misacylated Cys-tRNA(Pro) is not edited by ProRS. The protein is Proline--tRNA ligase of Erwinia tasmaniensis (strain DSM 17950 / CFBP 7177 / CIP 109463 / NCPPB 4357 / Et1/99).